The sequence spans 293 residues: MFEGIGTAIVTPFKEGKLDIESYEKLLNFQINNQINAIIVLGTTGEAPNISLDEREILIKKAKEVSGNKAKVIVGAGSNGINHTIELIKNAEKNGADGLLIVTPYYNKPTQNGLYEYYKYISEHTDLEIIVYNVPSRTGINILPETVYKIASDCKNVKALKEANSSFEQINKDLLLLKELKDFKIFSGNDDTAFQLLASGGDGVISVASNIIPLQMVQMFNFIKNGEIEKARNIHFSYYKLFKNLFIETNPIPVKAALSIMGFINNELRLPLVPASESTMKIITETLKGCGVI.

Thr-44 is a pyruvate binding site. The active-site Proton donor/acceptor is the Tyr-132. Lys-161 functions as the Schiff-base intermediate with substrate in the catalytic mechanism. Ile-205 is a pyruvate binding site.

Belongs to the DapA family. Homotetramer; dimer of dimers.

It localises to the cytoplasm. The enzyme catalyses L-aspartate 4-semialdehyde + pyruvate = (2S,4S)-4-hydroxy-2,3,4,5-tetrahydrodipicolinate + H2O + H(+). It functions in the pathway amino-acid biosynthesis; L-lysine biosynthesis via DAP pathway; (S)-tetrahydrodipicolinate from L-aspartate: step 3/4. Functionally, catalyzes the condensation of (S)-aspartate-beta-semialdehyde [(S)-ASA] and pyruvate to 4-hydroxy-tetrahydrodipicolinate (HTPA). The chain is 4-hydroxy-tetrahydrodipicolinate synthase from Thermosipho africanus (strain TCF52B).